Consider the following 305-residue polypeptide: Acetaldehyde dehydrogenase (305 aa).

Cysteine 130 functions as the Acyl-thioester intermediate in the catalytic mechanism. Residues 161-169 (SVGPGTRKN) and asparagine 272 each bind NAD(+).

This sequence belongs to the acetaldehyde dehydrogenase family.

The enzyme catalyses acetaldehyde + NAD(+) + CoA = acetyl-CoA + NADH + H(+). The chain is Acetaldehyde dehydrogenase from Leptothrix cholodnii (strain ATCC 51168 / LMG 8142 / SP-6) (Leptothrix discophora (strain SP-6)).